The primary structure comprises 684 residues: Collagen alpha-3(IX) chain (684 aa).

Positions 1 to 25 (MAGPRACAPLLLLLLLGELLAAAGA) are cleaved as a signal peptide. Disordered stretches follow at residues 26-521 (QRVG…KEAS) and 548-665 (LAPG…CDTS). Residues 29-519 (GLPGPPGPPG…TGKPGVPGKE (491 aa)) are triple-helical region 3 (COL3). Pro residues-rich tracts occupy residues 31–42 (PGPPGPPGPPGK) and 55–64 (PGLPGPPGPK). Low complexity predominate over residues 66-82 (APGKPGKPGEAGLPGLP). Positions 130 to 139 (GPPGGIGLRG) are enriched in gly residues. 2 stretches are compositionally biased toward pro residues: residues 140–161 (PPGPSGLPGLPGPPGPPGPPGH) and 177–188 (ICPPGPPGPPGM). Residues 200 to 212 (EQGEVGKDGEKGD) show a composition bias toward basic and acidic residues. A compositionally biased stretch (low complexity) spans 221-237 (LPGSVGLQGPRGLRGLP). 2 stretches are compositionally biased toward basic and acidic residues: residues 264 to 282 (AGDRGERGPEGFRGPKGDL) and 344 to 356 (SKGEKGERGRAGE). The Cell attachment site motif lies at 423–425 (RGD). Asparagine 483 carries an N-linked (GlcNAc...) asparagine glycan. Residues 498-507 (LGLQGVPGVP) are compositionally biased toward low complexity. Residues 520-550 (ASEQRIRELCGGMISEQIAQLAAHLRKPLAP) form a nonhelical region 3 (NC3) region. A triple-helical region 2 (COL2) region spans residues 551 to 630 (GSIGRPGPAG…QGPQGVPGTS (80 aa)). Pro residues predominate over residues 558–568 (PAGPPGPPGPP). The span at 570–586 (SIGHPGARGPPGYRGPT) shows a compositional bias: low complexity. A Cell attachment site motif is present at residues 601-603 (RGD). The span at 617–628 (DQGPQGPQGVPG) shows a compositional bias: low complexity. The tract at residues 631-632 (KD) is nonhelical region 2 (NC2). Residues 633–661 (GQDGAPGEPGPPGDPGLPGAIGAQGTPGI) are triple-helical region 1 (COL1). Positions 662–684 (CDTSACQGAVLGGVGEKSGSRSS) are nonhelical region 1 (NC1).

This sequence belongs to the fibril-associated collagens with interrupted helices (FACIT) family. In terms of assembly, heterotrimer of an alpha 1(IX), an alpha 2(IX) and an alpha 3(IX) chain. Post-translationally, covalently linked to the telopeptides of type II collagen by lysine-derived cross-links. Prolines at the third position of the tripeptide repeating unit (G-X-Y) are hydroxylated in some or all of the chains.

Its subcellular location is the secreted. It is found in the extracellular space. It localises to the extracellular matrix. In terms of biological role, structural component of hyaline cartilage and vitreous of the eye. In Homo sapiens (Human), this protein is Collagen alpha-3(IX) chain (COL9A3).